The sequence spans 262 residues: Ribosomal RNA small subunit methyltransferase G (262 aa).

S-adenosyl-L-methionine-binding residues include Gly72, Leu77, and Arg142. The tract at residues 212–262 (RSSQLSRAEGRKGRGDGERHDGRQVRRTARDSRRSREVDRDQPTRGQSRST) is disordered. Over residues 219–254 (AEGRKGRGDGERHDGRQVRRTARDSRRSREVDRDQP) the composition is skewed to basic and acidic residues.

Belongs to the methyltransferase superfamily. RNA methyltransferase RsmG family.

It localises to the cytoplasm. In terms of biological role, specifically methylates the N7 position of guanine in position 518 of 16S rRNA. The chain is Ribosomal RNA small subunit methyltransferase G from Frankia alni (strain DSM 45986 / CECT 9034 / ACN14a).